The sequence spans 534 residues: Zinc finger protein 397 (534 aa).

Phosphoserine is present on Ser-31. Residues 50 to 132 (RQQFRKFCYQ…TLLEDLEREF (83 aa)) enclose the SCAN box domain. Residues Lys-55, Lys-171, Lys-202, and Lys-252 each participate in a glycyl lysine isopeptide (Lys-Gly) (interchain with G-Cter in SUMO2) cross-link. A disordered region spans residues 197–242 (DISGEKSQRLSQEPSFGGFSEHKSSLEWQQGSAPGETLRRSPSQRA). 9 C2H2-type zinc fingers span residues 285–307 (YRCD…QRIH), 313–335 (YKCN…QRIH), 341–363 (YECS…RKIH), 369–391 (CKCN…QRIH), 397–419 (YECN…QRIH), 425–447 (YECN…QRIH), 453–475 (YECN…QRIH), 481–503 (YQCN…QRIH), and 509–531 (YICS…QRVH).

This sequence belongs to the krueppel C2H2-type zinc-finger protein family.

It localises to the nucleus. DNA-dependent transcriptional repressor. The chain is Zinc finger protein 397 (ZNF397) from Bos taurus (Bovine).